Consider the following 342-residue polypeptide: DDB1- and CUL4-associated factor 7 (342 aa).

7 WD repeats span residues 6-52 (KRKE…LVGL), 60-100 (ICRN…VWRV), 108-150 (ECLL…IWGL), 165-206 (HVKT…MFDL), 213-252 (TIIY…ILDV), 257-296 (TPVA…IWDI), and 303-342 (IEDP…ILRV).

Belongs to the WD repeat DCAF7 family. As to quaternary structure, interacts with DYRK1A, DYRK1B and DIAPH1. Interacts with DDB1. Interacts with ZNF703. Interacts with human adenovirus 5 E1A protein.

The protein localises to the cytoplasm. It is found in the nucleus. The protein operates within protein modification; protein ubiquitination. Its function is as follows. Involved in craniofacial development. Acts upstream of the EDN1 pathway and is required for formation of the upper jaw equivalent, the palatoquadrate. The activity required for EDN1 pathway function differs between the first and second arches. Associates with DIAPH1 and controls GLI1 transcriptional activity. Could be involved in normal and disease skin development. May function as a substrate receptor for CUL4-DDB1 E3 ubiquitin-protein ligase complex. This Homo sapiens (Human) protein is DDB1- and CUL4-associated factor 7 (DCAF7).